The chain runs to 374 residues: Lipid-A-disaccharide synthase (374 aa).

The protein belongs to the LpxB family.

The catalysed reaction is a lipid X + a UDP-2-N,3-O-bis[(3R)-3-hydroxyacyl]-alpha-D-glucosamine = a lipid A disaccharide + UDP + H(+). The protein operates within bacterial outer membrane biogenesis; LPS lipid A biosynthesis. Its function is as follows. Condensation of UDP-2,3-diacylglucosamine and 2,3-diacylglucosamine-1-phosphate to form lipid A disaccharide, a precursor of lipid A, a phosphorylated glycolipid that anchors the lipopolysaccharide to the outer membrane of the cell. In Pseudomonas fluorescens (strain ATCC BAA-477 / NRRL B-23932 / Pf-5), this protein is Lipid-A-disaccharide synthase.